A 425-amino-acid polypeptide reads, in one-letter code: Monoacylglycerol lipase ABHD2 (425 aa).

At 1-9 (MNAMLETPE) the chain is on the cytoplasmic side. A helical; Signal-anchor for type II membrane protein transmembrane segment spans residues 10-30 (LPAVFDGVKLAAVAAVLYVIV). The Extracellular portion of the chain corresponds to 31-425 (RCLNLKSPTA…DTEQVEADLE (395 aa)). In terms of domain architecture, AB hydrolase-1 spans 128–382 (MVICPGIANH…HGGHLGFFEG (255 aa)). Asn-136 is a glycosylation site (N-linked (GlcNAc...) asparagine). The active-site Nucleophile is Ser-207. Active-site charge relay system residues include Asp-345 and His-376.

The protein belongs to the AB hydrolase superfamily. AB hydrolase 4 family. Present in sperm (at protein level).

The protein localises to the cell projection. The protein resides in the cilium. It is found in the flagellum membrane. It localises to the cell membrane. It catalyses the reaction an acetyl ester + H2O = an aliphatic alcohol + acetate + H(+). The catalysed reaction is Hydrolyzes glycerol monoesters of long-chain fatty acids.. It carries out the reaction a triacylglycerol + H2O = a diacylglycerol + a fatty acid + H(+). The enzyme catalyses 2-(5Z,8Z,11Z,14Z-eicosatetraenoyl)-glycerol + H2O = glycerol + (5Z,8Z,11Z,14Z)-eicosatetraenoate + H(+). It catalyses the reaction a butanoate ester + H2O = an aliphatic alcohol + butanoate + H(+). The catalysed reaction is hexadecanoate ester + H2O = an aliphatic alcohol + hexadecanoate + H(+). With respect to regulation, acylglycerol lipase activity is activated upon binding to progesterone. Its function is as follows. Progesterone-dependent acylglycerol lipase that catalyzes hydrolysis of endocannabinoid arachidonoylglycerol (AG) from cell membrane. Acts as a progesterone receptor: progesterone-binding activates the acylglycerol lipase activity, mediating degradation of 1-arachidonoylglycerol (1AG) and 2-arachidonoylglycerol (2AG) to glycerol and arachidonic acid (AA). Also displays an ester hydrolase activity against acetyl ester, butanoate ester and hexadecanoate ester. Plays a key role in sperm capacitation in response to progesterone by mediating degradation of 2AG, an inhibitor of the sperm calcium channel CatSper, leading to calcium influx via CatSper and sperm activation. May also play a role in smooth muscle cells migration. This is Monoacylglycerol lipase ABHD2 from Homo sapiens (Human).